A 127-amino-acid chain; its full sequence is Glycine cleavage system H protein 1 (127 aa).

Positions 20–101 constitute a Lipoyl-binding domain; the sequence is SVTVGITAYA…MGEGWFFRFI (82 aa). Residue lysine 60 is modified to N6-lipoyllysine.

The protein belongs to the GcvH family. As to quaternary structure, the glycine cleavage system is composed of four proteins: P, T, L and H. Requires (R)-lipoate as cofactor.

Functionally, the glycine cleavage system catalyzes the degradation of glycine. The H protein shuttles the methylamine group of glycine from the P protein to the T protein. The chain is Glycine cleavage system H protein 1 from Pseudomonas putida (strain ATCC 47054 / DSM 6125 / CFBP 8728 / NCIMB 11950 / KT2440).